The chain runs to 106 residues: Replication restart protein PriB (106 aa).

Positions 4 to 103 (MNRLVLSGTV…LHAEQIELID (100 aa)) constitute an SSB domain.

It belongs to the PriB family. As to quaternary structure, homodimer. Interacts with PriA and DnaT. Component of the replication restart primosome. Primosome assembly occurs via a 'hand-off' mechanism. PriA binds to replication forks, subsequently PriB then DnaT bind; DnaT then displaces ssDNA to generate the helicase loading substrate.

Its function is as follows. Involved in the restart of stalled replication forks, which reloads the replicative helicase on sites other than the origin of replication; the PriA-PriB pathway is the major replication restart pathway. During primosome assembly it facilitates complex formation between PriA and DnaT on DNA; stabilizes PriA on DNA. Stimulates the DNA unwinding activity of PriA helicase. The chain is Replication restart protein PriB from Pectobacterium atrosepticum (strain SCRI 1043 / ATCC BAA-672) (Erwinia carotovora subsp. atroseptica).